A 76-amino-acid polypeptide reads, in one-letter code: DNA-directed RNA polymerase subunit epsilon (76 aa).

It belongs to the RNA polymerase subunit epsilon family. As to quaternary structure, RNAP is composed of a core of 2 alpha, a beta and a beta' subunit. The core is associated with a delta subunit, and at least one of epsilon or omega. When a sigma factor is associated with the core the holoenzyme is formed, which can initiate transcription.

It catalyses the reaction RNA(n) + a ribonucleoside 5'-triphosphate = RNA(n+1) + diphosphate. A non-essential component of RNA polymerase (RNAP). In Lactococcus lactis subsp. lactis (strain IL1403) (Streptococcus lactis), this protein is DNA-directed RNA polymerase subunit epsilon.